A 365-amino-acid polypeptide reads, in one-letter code: Chorismate synthase (365 aa).

The interval 41-61 is disordered; the sequence is IQKELDRRRPGQSEVSTPRHE. Arginine 48 contacts NADP(+). Residues 125–127, glycine 285, 300–304, and arginine 327 contribute to the FMN site; these read RSS and KPTPS.

It belongs to the chorismate synthase family. The cofactor is FMNH2.

The enzyme catalyses 5-O-(1-carboxyvinyl)-3-phosphoshikimate = chorismate + phosphate. It participates in metabolic intermediate biosynthesis; chorismate biosynthesis; chorismate from D-erythrose 4-phosphate and phosphoenolpyruvate: step 7/7. In terms of biological role, catalyzes the anti-1,4-elimination of the C-3 phosphate and the C-6 proR hydrogen from 5-enolpyruvylshikimate-3-phosphate (EPSP) to yield chorismate, which is the branch point compound that serves as the starting substrate for the three terminal pathways of aromatic amino acid biosynthesis. This reaction introduces a second double bond into the aromatic ring system. This chain is Chorismate synthase, found in Methanosarcina barkeri (strain Fusaro / DSM 804).